The sequence spans 507 residues: Efflux pump ustT (507 aa).

11 consecutive transmembrane segments (helical) span residues 59 to 79 (IAVVASLTFLITDIAGQIIVA), 146 to 166 (LLIAMVGCLLSDIWVGVVTWF), 180 to 200 (IWQLIGGGGASISSMAFAMIA), 216 to 236 (HAAVLVAELVSVPAGAALANF), 240 to 260 (IPVFGAAIFMVLGILFAYVVV), 316 to 336 (VLLIMASFFVCQLGRMISGIT), 359 to 379 (AGVNLFVLAAIIPALSYILVK), 398 to 418 (VCLIIGSFVMFLAASPGTLVF), 421 to 441 (TVFALGFAFSVTARSFLTGMV), 449 to 469 (VFTGVTTMLYGGLVIGSPMLA), and 481 to 501 (IWVGLPFLLAAVLFTLALGAI).

It belongs to the major facilitator superfamily.

The protein resides in the cell membrane. Its pathway is mycotoxin biosynthesis. Its function is as follows. Efflux pump; part of the gene cluster that mediates the biosynthesis of the secondary metabolite ustiloxin B, an antimitotic tetrapeptide. Probably involved in self-resistance through the export of ustiloxin B. In Aspergillus flavus (strain ATCC 200026 / FGSC A1120 / IAM 13836 / NRRL 3357 / JCM 12722 / SRRC 167), this protein is Efflux pump ustT.